The following is an 837-amino-acid chain: Outer membrane usher protein HifC (837 aa).

A signal peptide spans 1–26; that stretch reads MKTKIFPLNKIAFACSLLLANPLAWA. A disulfide bridge links C813 with C833.

It belongs to the fimbrial export usher family.

The protein localises to the cell outer membrane. Its function is as follows. Essential for piliation. The chain is Outer membrane usher protein HifC (hifC) from Haemophilus influenzae.